We begin with the raw amino-acid sequence, 468 residues long: Trigger factor (468 aa).

One can recognise a PPIase FKBP-type domain in the interval 162–243 (GDVLTLDLQA…VSQVAARELP (82 aa)). Residues 428-468 (NGEIVDLDDEEDEETEAAEADATEAADAEKADDKAEEKTEG) form a disordered region. A compositionally biased stretch (acidic residues) spans 432 to 453 (VDLDDEEDEETEAAEADATEAA). Residues 454-468 (DAEKADDKAEEKTEG) are compositionally biased toward basic and acidic residues.

This sequence belongs to the FKBP-type PPIase family. Tig subfamily.

The protein resides in the cytoplasm. The catalysed reaction is [protein]-peptidylproline (omega=180) = [protein]-peptidylproline (omega=0). Involved in protein export. Acts as a chaperone by maintaining the newly synthesized protein in an open conformation. Functions as a peptidyl-prolyl cis-trans isomerase. In Streptomyces coelicolor (strain ATCC BAA-471 / A3(2) / M145), this protein is Trigger factor.